A 679-amino-acid polypeptide reads, in one-letter code: DNA ligase (679 aa).

NAD(+)-binding positions include Asp-43 to Asp-47, Ser-92 to Met-93, and Glu-124. The active-site N6-AMP-lysine intermediate is the Lys-126. The NAD(+) site is built by Arg-147, Glu-181, Lys-297, and Lys-321. 4 residues coordinate Zn(2+): Cys-415, Cys-418, Cys-433, and Cys-438. The BRCT domain occupies Thr-599 to Asn-679.

The protein belongs to the NAD-dependent DNA ligase family. LigA subfamily. Requires Mg(2+) as cofactor. Mn(2+) is required as a cofactor.

It catalyses the reaction NAD(+) + (deoxyribonucleotide)n-3'-hydroxyl + 5'-phospho-(deoxyribonucleotide)m = (deoxyribonucleotide)n+m + AMP + beta-nicotinamide D-nucleotide.. Its function is as follows. DNA ligase that catalyzes the formation of phosphodiester linkages between 5'-phosphoryl and 3'-hydroxyl groups in double-stranded DNA using NAD as a coenzyme and as the energy source for the reaction. It is essential for DNA replication and repair of damaged DNA. The polypeptide is DNA ligase (Limosilactobacillus fermentum (strain NBRC 3956 / LMG 18251) (Lactobacillus fermentum)).